Reading from the N-terminus, the 944-residue chain is Trehalose monomycolate exporter MmpL3 (944 aa).

Over 1–13 the chain is Cytoplasmic; that stretch reads MFAWWGRTVYRYR. The helical transmembrane segment at 14 to 34 threads the bilayer; that stretch reads FIVIGVMVALCLGGGVFGLSL. Topologically, residues 35–185 are periplasmic; that stretch reads GKHVTQSGFY…TIATDQRRME (151 aa). 40–44 provides a ligand contact to a 1,2-diacylglycero-3-phosphoethanolamine; that stretch reads QSGFY. Residues 186–206 form a helical membrane-spanning segment; it reads VLALPLVAVVLFFVFGGVIAA. Over 207–209 the chain is Cytoplasmic; it reads GLP. The chain crosses the membrane as a helical span at residues 210 to 230; it reads VMVGGLCIAGALGIMRFLAIF. At 231–235 the chain is on the periplasmic side; the sequence is GPVHY. The chain crosses the membrane as a helical span at residues 236–256; that stretch reads FAQPVVSLIGLGIAIDYGLFI. Residues 257 to 286 are Cytoplasmic-facing; it reads VSRFREEIAEGYDTETAVRRTVITAGRTVT. A helical membrane pass occupies residues 287–307; sequence FSAVLIVASAIGLLLFPQGFL. At 308–314 the chain is on the periplasmic side; it reads KSLTYAT. The chain crosses the membrane as a helical span at residues 315-335; it reads IASVMLSAILSITVLPACLGI. Over 336 to 396 the chain is Cytoplasmic; it reads LGKHVDALGV…KLVNRVMKRP (61 aa). Residues 397–417 form a helical membrane-spanning segment; the sequence is VLFAAPIVIIMILLIIPVGKL. The Periplasmic portion of the chain corresponds to 418 to 562; it reads SLGGISEKYL…HGLFAKMPLM (145 aa). A helical transmembrane segment spans residues 563 to 583; that stretch reads VVILLTTTIVLMFLAFGSVVL. Topologically, residues 584 to 586 are cytoplasmic; that stretch reads PIK. Residues 587–607 traverse the membrane as a helical segment; that stretch reads ATLMSALTLGSTMGILTWIFV. Over 608 to 616 the chain is Periplasmic; the sequence is DGHFSKWLN. The chain crosses the membrane as a helical span at residues 617-637; it reads FTPTPLTAPVIGLIIALVFGL. At 638 to 672 the chain is on the cytoplasmic side; that stretch reads STDYEVFLVSRMVEARERGMSTQEAIRIGTAATGR. Residues 673 to 693 traverse the membrane as a helical segment; it reads IITAAALIVAVVAGAFVFSDL. At 694 to 698 the chain is on the periplasmic side; it reads VMMKY. A helical membrane pass occupies residues 699 to 719; the sequence is LAFGLMAALLLDATVVRMFLV. Over 720–944 the chain is Cytoplasmic; that stretch reads PSVMKLLGDD…QDLLRREGRL (225 aa). The interval 778-944 is disordered; the sequence is AAGDPRPPHD…QDLLRREGRL (167 aa). The segment covering 791 to 828 has biased composition (low complexity); sequence PLAESPRPARSSPASSPELTPALEATAAPAAPSGASTT. Positions 829–839 are enriched in polar residues; it reads RMQIGSSTEPP. Over residues 855–866 the composition is skewed to pro residues; sequence STPPPTPTPPSA.

Belongs to the resistance-nodulation-cell division (RND) (TC 2.A.6) family. MmpL subfamily. Monomer. Interacts with TtfA (via N-terminus); active trehalose monomycolate (TMM) biosynthesis is not required for the complex formation.

The protein localises to the cell inner membrane. It is found in the cell septum. Its subcellular location is the cell tip. Inhibited by the antitubercular drug SQ109. Also inhibited by several other compounds such as the pyrrole derivative BM212, the adamantyl urea derivative AU1235, the benzimidazole C215, indoleamides, tetrahydropyrazolo[1,5-a]pyrimidine-3-carboxamide (THPP) and N-benzyl-6',7'-dihydrospiro[piperidine-4,4'-thieno[3,2-c]pyran] (Spiro) analogs. Inhibitory effects of these compounds, including SQ109, are most likely due to their ability to dissipate the transmembrane electrochemical proton gradient. Transports trehalose monomycolate (TMM) to the cell wall. Flips TMM across the inner membrane. Membrane potential is not required for this function. Transports probably phosphatidylethanolamine (PE) as well. Binds specifically both TMM and PE, but not trehalose dimycolate (TDM). Also binds diacylglycerol (DAG) and other phospholipids, including phosphatidylglycerol (PG), phosphatidylinositol (PI), and cardiolipin (CDL). Contributes to membrane potential, cell wall composition, antibiotic susceptibility and fitness. Could also be part of a heme-iron acquisition system. Functionally, is the target of the antitubercular drug SQ109. In Mycobacterium tuberculosis (strain ATCC 25618 / H37Rv), this protein is Trehalose monomycolate exporter MmpL3 (mmpL3).